A 342-amino-acid chain; its full sequence is MANVALLSAASPSTSSAAPRLRHVARRRPSRRSACPRSAASRLSIMAALGEDPIRQWILTEGKATKITGVSSIGGGCINSAQCYKTDAGSFFVKTNGRIGPSMFEGEALGLKAMYDTNSIRVPLPYKVGSLPTGGSFIIMEFIEFGCSRGDQSALGRKLAEMHKAAKSDKGYGFYVDNTIGSTPQINTWTADWIEFYSKHRLGFQLELITQRFGDSAIYDKGQRLIENMHPLFEGAVMEPCLLHGDLWSGNISSDTDGEPVILDPACYYGHNEAEFGMSWCAGFGGEFYSSYFEVMPKQPGFEKRRDLYLLYHYLNHYNLFGSGYRSSAMSIIDDYLRMLKA.

A chloroplast-targeting transit peptide spans 1 to 46 (MANVALLSAASPSTSSAAPRLRHVARRRPSRRSACPRSAASRLSIM). An ATP-binding site is contributed by 141–143 (EFI). The Proton acceptor role is filled by D246.

This sequence belongs to the fructosamine kinase family.

The protein resides in the plastid. The protein localises to the chloroplast. The catalysed reaction is N(6)-D-ribulosyl-L-lysyl-[protein] + ATP = N(6)-(3-O-phospho-D-ribulosyl)-L-lysyl-[protein] + ADP + H(+). It catalyses the reaction N(6)-(D-erythrulosyl)-L-lysyl-[protein] + ATP = N(6)-(3-O-phospho-D-erythrulosyl)-L-lysyl-[protein] + ADP + H(+). Initiates a process leading to the deglycation of proteins. Phosphorylates low-molecular-mass and protein-bound erythrulosamines and ribulosamines, but not fructosamines or psicosamines, on the third carbon of the sugar moiety. Protein-bound erythrulosamine 3-phosphates and ribulosamine 3-phosphates are unstable and decompose under physiological conditions. The chain is Protein-ribulosamine 3-kinase, chloroplastic from Oryza sativa subsp. indica (Rice).